The sequence spans 526 residues: Serine/threonine-protein kinase ppk22 (526 aa).

Disordered regions lie at residues 1–24 (MARE…QSHF) and 39–106 (AATV…PRPL). Residues 10–23 (KSPSSTDDGMSQSH) show a composition bias toward polar residues. Low complexity predominate over residues 65 to 78 (NQLNELDLNDSSDQ). S154 carries the phosphoserine modification. The 291-residue stretch at 155–445 (FEKIRLLGQG…ASDIKQHPFF (291 aa)) folds into the Protein kinase domain. ATP-binding positions include 161-169 (LGQGDVGKV) and K184. D280 serves as the catalytic Proton acceptor. The residue at position 339 (T339) is a Phosphothreonine. Residue S341 is modified to Phosphoserine. Position 348 is a phosphotyrosine (Y348). The AGC-kinase C-terminal domain occupies 446–526 (RHIQWALLRS…SVTLHHAGDE (81 aa)). Residues 499-526 (MHSSTPVNEQSNPFDSFSSVTLHHAGDE) are disordered. Residues 500–519 (HSSTPVNEQSNPFDSFSSVT) are compositionally biased toward polar residues.

It belongs to the protein kinase superfamily. AGC Ser/Thr protein kinase family.

It localises to the cytoplasm. It carries out the reaction L-seryl-[protein] + ATP = O-phospho-L-seryl-[protein] + ADP + H(+). It catalyses the reaction L-threonyl-[protein] + ATP = O-phospho-L-threonyl-[protein] + ADP + H(+). The polypeptide is Serine/threonine-protein kinase ppk22 (ppk22) (Schizosaccharomyces pombe (strain 972 / ATCC 24843) (Fission yeast)).